Here is a 310-residue protein sequence, read N- to C-terminus: Integrin-binding sialoprotein (310 aa).

The first 16 residues, 1-16 (MKTVLILLSILGMACA), serve as a signal peptide directing secretion. 7 positions are modified to phosphoserine: S31, S62, S67, S75, S76, S98, and S106. Residues 61-284 (QSSSDSSEEN…NGDPRGDNYR (224 aa)) form a disordered region. Low complexity predominate over residues 62 to 74 (SSSDSSEENGNGD). 2 stretches are compositionally biased toward acidic residues: residues 75 to 87 (SSEEEEEEEETSN) and 96 to 108 (EDSDENEDEESEA). N110 is a glycosylation site (N-linked (GlcNAc...) asparagine). Residue T144 is modified to Phosphothreonine. The segment covering 152–174 (DESDEEEEEEEEEENEAEVDDNE) has biased composition (acidic residues). Position 154 is a phosphoserine (S154). A compositionally biased stretch (polar residues) spans 175 to 187 (QGINGTSSNSTEV). N178 and N183 each carry an N-linked (GlcNAc...) asparagine glycan. Acidic residues predominate over residues 198–208 (NGEEDGEEESV). Residues 209 to 227 (TEANTEGITVAGETTTSPN) are compositionally biased toward polar residues. S273 bears the Phosphoserine mark. The Integrin-binding motif signature appears at 279 to 281 (RGD). The residue at position 300 (S300) is a Phosphoserine. 2 positions are modified to sulfotyrosine: Y306 and Y307.

As to quaternary structure, monomer. Interacts with integrins; the interaction promotes cell adhesion.

It localises to the secreted. Its function is as follows. Binds tightly to hydroxyapatite. Appears to form an integral part of the mineralized matrix. Probably important to cell-matrix interaction. Promotes adhesion and migration of various cells via the alpha-V/beta-3 integrin receptor (ITGAV:ITGB3). The sequence is that of Integrin-binding sialoprotein (IBSP) from Bos taurus (Bovine).